The primary structure comprises 460 residues: Light-independent protochlorophyllide reductase subunit N (460 aa).

The [4Fe-4S] cluster site is built by Cys22, Cys47, and Cys107.

It belongs to the BchN/ChlN family. Protochlorophyllide reductase is composed of three subunits; ChlL, ChlN and ChlB. Forms a heterotetramer of two ChlB and two ChlN subunits. [4Fe-4S] cluster serves as cofactor.

It catalyses the reaction chlorophyllide a + oxidized 2[4Fe-4S]-[ferredoxin] + 2 ADP + 2 phosphate = protochlorophyllide a + reduced 2[4Fe-4S]-[ferredoxin] + 2 ATP + 2 H2O. The protein operates within porphyrin-containing compound metabolism; chlorophyll biosynthesis (light-independent). In terms of biological role, component of the dark-operative protochlorophyllide reductase (DPOR) that uses Mg-ATP and reduced ferredoxin to reduce ring D of protochlorophyllide (Pchlide) to form chlorophyllide a (Chlide). This reaction is light-independent. The NB-protein (ChlN-ChlB) is the catalytic component of the complex. In Thermosynechococcus vestitus (strain NIES-2133 / IAM M-273 / BP-1), this protein is Light-independent protochlorophyllide reductase subunit N.